The sequence spans 128 residues: Small ribosomal subunit protein uS14m (128 aa).

The protein belongs to the universal ribosomal protein uS14 family. In terms of assembly, component of the mitochondrial ribosome small subunit (28S) which comprises a 12S rRNA and about 30 distinct proteins. Interacts with LIAT1.

The protein localises to the mitochondrion. The polypeptide is Small ribosomal subunit protein uS14m (MRPS14) (Bos taurus (Bovine)).